Reading from the N-terminus, the 587-residue chain is DELLA protein RGA (587 aa).

Residues 1 to 26 (MKRDHHQFQGRLSNHGTSSSSSSISK) form a disordered region. A DELLA motif motif is present at residues 44-48 (DELLA). Residues 66–70 (LEQLE) carry the LEXLE motif motif. The short motif at 89–93 (VHYNP) is the VHYNP motif element. Residues 152–181 (IDSSSSSNNQNKRLKSCSSPDSMVTSTSTG) form a disordered region. Residues 153 to 175 (DSSSSSNNQNKRLKSCSSPDSMV) are compositionally biased toward polar residues. The GRAS domain occupies 212–581 (VDSQENGVRL…RPLITTSAWK (370 aa)). The tract at residues 219 to 273 (VRLVHALMACAEAIQQNNLTLAEALVKQIGCLAVSQAGAMRKVATYFAEALARRI) is leucine repeat I (LRI). Residues 292-357 (QMHFYETCPY…GGPPTFRLTG (66 aa)) form a VHIID region. The VHIID signature appears at 323–327 (VHVID). Residues 371–403 (EVGCKLAQLAEAIHVEFEYRGFVANSLADLDAS) form a leucine repeat II (LRII) region. The interval 415-502 (VAVNSVFELH…EVYLGKQICN (88 aa)) is PFYRE. The LXXLL motif motif lies at 423–427 (LHKLL). The segment at 505 to 581 (ACEGPDRVER…RPLITTSAWK (77 aa)) is SAW.

Belongs to the GRAS family. DELLA subfamily. As to quaternary structure, interacts directly with the GID2/SLY1 component of the SCF(GID2) complex. Interacts (via N-terminus) with GID1A, GID1B and GID1B (via N-terminus). Binds to bHLH transcription factors such as MYC2, PIF1, PIF4, PIF6 and SPT. Interacts with the BOI proteins BOI, BRG1, BRG2 and BRG3. Interacts with NFYC9. Interacts with TOPP4. Interacts with FLZ5. Binds to zinc finger proteins MGP/IDD3, IDD4, IDD5, BIB/IDD9 and JKD/IDD10 in the nucleus. Binds to and coactivates GAF1/IDD2 and ENY/IDD1. Binds to PDF2 and ATML1. Post-translationally, phosphorylated. Phosphorylation may increase the interaction with GID2. In terms of processing, gibberellin (GA) induces dephosphorylation of RGA by TOPP4 and subsequent degradation by the proteasomal pathway. Ubiquitinated. Upon GA application it is ubiquitinated by the SCF(GID2) complex, leading to its subsequent degradation. Post-translationally, O-fucosylated by SPY. O-fucosylation enhances RGA activity by promoting RGA binding to key transcription factors in brassinosteroid and light signaling pathways. Ubiquitously expressed. Expressed in roots, rosette leaves, bolting and mature stems, young and mature siliques, flower buds and influorescences.

The protein localises to the nucleus. Functionally, probable transcriptional regulator that acts as a repressor of the gibberellin (GA) signaling pathway. Probably acts by participating in large multiprotein complexes that repress transcription of GA-inducible genes. Positively regulates XERICO expression in seeds. Upon GA application, it is degraded by the proteasome, allowing the GA signaling pathway. Compared to other DELLA proteins, it is the most sensitive to GA application. No effect of the BOI proteins on its stability. Its activity is probably regulated by other phytohormones such as auxin and ethylene, attenuation of auxin transport delaying its GA-induced degradation. Involved in the regulation of seed dormancy and germination, including glucose-induced delay of seed germination. This is DELLA protein RGA from Arabidopsis thaliana (Mouse-ear cress).